The following is a 525-amino-acid chain: Heat shock factor protein 1 (525 aa).

Residue Met1 is modified to N-acetylmethionine. The DNA-binding domain stretch occupies residues Val15–Thr120. Lys80 carries the N6-acetyllysine modification. Lys91 bears the N6-acetyllysine; alternate mark. Lys91 participates in a covalent cross-link: Glycyl lysine isopeptide (Lys-Gly) (interchain with G-Cter in SUMO2); alternate. At Lys118 the chain carries N6-acetyllysine. Residue Ser121 is modified to Phosphoserine; by MAPKAPK2. Residues Lys126 and Lys131 each participate in a glycyl lysine isopeptide (Lys-Gly) (interchain with G-Cter in SUMO2) cross-link. The segment at Ile130–Leu203 is hydrophobic repeat HR-A/B. A Phosphothreonine; by CK2 modification is found at Thr142. N6-acetyllysine occurs at positions 150 and 188. Residues Leu203–Lys224 form a d domain region. The residue at position 208 (Lys208) is an N6-acetyllysine; alternate. Lys208 is covalently cross-linked (Glycyl lysine isopeptide (Lys-Gly) (interchain with G-Cter in SUMO2); alternate). Residue Ser216 is modified to Phosphoserine; by PLK1. The segment at Ser221–Val310 is regulatory domain. Lys224 participates in a covalent cross-link: Glycyl lysine isopeptide (Lys-Gly) (interchain with G-Cter in SUMO2). Ser230 is subject to Phosphoserine; by CAMK2A. 2 disordered regions span residues Ala272–Pro327 and Pro340–Thr365. Residues Ser275 and Ser292 each carry the phosphoserine modification. N6-acetyllysine; alternate is present on Lys298. Lys298 participates in a covalent cross-link: Glycyl lysine isopeptide (Lys-Gly) (interchain with G-Cter in SUMO2); alternate. Lys298 is covalently cross-linked (Glycyl lysine isopeptide (Lys-Gly) (interchain with G-Cter in SUMO); alternate). A phosphoserine mark is found at Ser303, Ser307, Ser314, and Ser319. Ser320 carries the post-translational modification Phosphoserine; by PKA. A Phosphothreonine modification is found at Thr323. Ser326 carries the phosphoserine; by MAPK12 modification. Residues Ala343–Ala355 show a composition bias toward polar residues. Position 345 is a phosphoserine (Ser345). The tract at residues Glu367–Ser525 is transactivation domain. The tract at residues Leu380–Val405 is hydrophobic repeat HR-C. The 9aaTAD signature appears at Ser408–Pro416. Phosphoserine; by PLK1 is present on Ser415. Position 440 is a phosphoserine (Ser440). Disordered regions lie at residues Pro441 to Gln460 and Tyr495 to Ser525. Residues Glu515–Ser525 are compositionally biased toward basic and acidic residues. Position 520 is an N6-acetyllysine (Lys520).

Belongs to the HSF family. Monomer; cytoplasmic latent and transcriptionally inactive monomeric form in unstressed cells. Homotrimer; in response to stress, such as heat shock, homotrimerizes and translocates into the nucleus, binds to heat shock element (HSE) sequences in promoter of heat shock protein (HSP) genes and acquires transcriptional ability. Interacts (via monomeric form) with FKBP4; this interaction occurs in unstressed cells. Associates (via monomeric form) with HSP90 proteins in a multichaperone complex in unnstressed cell; this association maintains HSF1 in a non-DNA-binding and transcriptional inactive form by preventing HSF1 homotrimerization. Homotrimeric transactivation activity is modulated by protein-protein interactions and post-translational modifications. Interacts with HSP90AA1; this interaction is decreased in a IER5-dependent manner, promoting HSF1 accumulation in the nucleus, homotrimerization and DNA-binding activities. Part (via regulatory domain in the homotrimeric form) of a large heat shock-induced HSP90-dependent multichaperone complex at least composed of FKBP4, FKBP5, HSP90 proteins, PPID, PPP5C and PTGES3; this association maintains the HSF1 homotrimeric DNA-bound form in a transcriptionally inactive form. Interacts with BAG3 (via BAG domain); this interaction occurs in normal and heat-shocked cells promoting nuclear shuttling of HSF1 in a BAG3-dependent manner. Interacts (via homotrimeric and hyperphosphorylated form) with FKBP4; this interaction occurs upon heat shock in a HSP90-dependent multichaperone complex. Interacts (via homotrimeric form preferentially) with EEF1A proteins. In heat shocked cells, stress-denatured proteins compete with HSF1 homotrimeric DNA-bound form for association of the HSP90-dependent multichaperone complex, and hence alleviating repression of HSF1-mediated transcriptional activity. Interacts (via homotrimeric form preferentially) with DAXX; this interaction relieves homotrimeric HSF1 from repression of its transcriptional activity by HSP90-dependent multichaperone complex upon heat shock. Interacts (via D domain and preferentially with hyperphosphorylated form) with JNK1; this interaction occurs under both normal growth conditions and immediately upon heat shock. Interacts (via D domain and preferentially with hyperphosphorylated form) with MAPK3; this interaction occurs upon heat shock. Interacts with IER5 (via central region); this interaction promotes PPP2CA-induced dephosphorylation on Ser-121, Ser-307, Ser-314 and Thr-323 and HSF1 transactivation activity. Found in a ribonucleoprotein complex composed of the HSF1 homotrimeric form, translation elongation factor eEF1A proteins and non-coding RNA heat shock RNA-1 (HSR1); this complex occurs upon heat shock and stimulates HSF1 DNA-binding activity. Interacts (via transactivation domain) with HSPA1A/HSP70 and DNAJB1; these interactions result in the inhibition of heat shock- and HSF1-induced transcriptional activity during the attenuation and recovery phase from heat shock. Interacts (via Ser-303 and Ser-307 phosphorylated form) with YWHAE; this interaction promotes HSF1 sequestration in the cytoplasm in an ERK-dependent manner. Found in a complex with IER5 and PPP2CA. Interacts with TPR; this interaction increases upon heat shock and stimulates export of HSP70 mRNA. Interacts with SYMPK (via N-terminus) and CSTF2; these interactions occur upon heat shock. Interacts (via transactivation domain) with HSPA8. Interacts with EEF1D; this interaction occurs at heat shock promoter element (HSE) sequences. Interacts with MAPKAPK2. Interacts with PRKACA/PKA. Interacts (via transactivation domain) with GTF2A2. Interacts (via transactivation domain) with GTF2B. Interacts (via transactivation domain) with TBP. Interacts with CDK9, CCNT1 and EP300. Interacts (via N-terminus) with XRCC5 (via N-terminus) and XRCC6 (via N-terminus); these interactions are direct and prevent XRCC5/XRCC6 heterodimeric binding and non-homologous end joining (NHEJ) repair activities induced by ionizing radiation (IR). Interacts with PLK1; this interaction occurs during the early mitotic period, increases upon heat shock but does not modulate neither HSF1 homotrimerization and DNA-binding activities. Interacts (via Ser-216 phosphorylated form) with CDC20; this interaction occurs in mitosis in a MAD2L1-dependent manner and prevents PLK1-stimulated degradation of HSF1 by blocking the recruitment of the SCF(BTRC) ubiquitin ligase complex. Interacts with MAD2L1; this interaction occurs in mitosis. Interacts with BTRC; this interaction occurs during mitosis, induces its ubiquitin-dependent degradation following stimulus-dependent phosphorylation at Ser-216, a process inhibited by CDC20. Interacts with HSP90AA1 and HSP90AB1. Forms a complex with TTC5/STRAP and p300/EP300; these interactions augment chromatin-bound HSF1 and p300/EP300 histone acetyltransferase activity. Post-translationally, phosphorylated. Phosphorylated in unstressed cells; this phosphorylation is constitutive and implicated in the repression of HSF1 transcriptional activity. Phosphorylated on Ser-121 by MAPKAPK2; this phosphorylation promotes interaction with HSP90 proteins and inhibits HSF1 homotrimerization, DNA-binding and transactivation activities. Phosphorylation on Ser-303 by GSK3B/GSK3-beat and on Ser-307 by MAPK3 within the regulatory domain is involved in the repression of HSF1 transcriptional activity and occurs in a RAF1-dependent manner. Phosphorylation on Ser-303 and Ser-307 increases HSF1 nuclear export in a YWHAE- and XPO1/CRM1-dependent manner. Phosphorylation on Ser-307 is a prerequisite for phosphorylation on Ser-303. According to, Ser-303 is not phosphorylated in unstressed cells. Phosphorylated on Ser-415 by PLK1; phosphorylation promotes nuclear translocation upon heat shock. Hyperphosphorylated upon heat shock and during the attenuation and recovery phase period of the heat shock response. Phosphorylated on Thr-142; this phosphorylation increases HSF1 transactivation activity upon heat shock. Phosphorylation on Ser-230 by CAMK2A; this phosphorylation enhances HSF1 transactivation activity upon heat shock. Phosphorylation on Ser-326 by MAPK12; this phosphorylation enhances HSF1 nuclear translocation, homotrimerization and transactivation activities upon heat shock. Phosphorylated on Ser-320 by PRKACA/PKA; this phosphorylation promotes nuclear localization and transcriptional activity upon heat shock. Phosphorylated by MAPK8; this phosphorylation occurs upon heat shock, induces HSF1 translocation into nuclear stress bodies and negatively regulates transactivation activity. Neither basal nor stress-inducible phosphorylation on Ser-230, Ser-292, Ser-303, Ser-307, Ser-314, Ser-319, Ser-320, Thr-323, Ser-326, Ser-338, Ser-345, Ser-364 and Thr-365 within the regulatory domain is involved in the regulation of HSF1 subcellular localization or DNA-binding activity; however, it negatively regulates HSF1 transactivation activity. Phosphorylated on Ser-216 by PLK1 in the early mitotic period; this phosphorylation regulates HSF1 localization to the spindle pole, the recruitment of the SCF(BTRC) ubiquitin ligase complex inducing HSF1 degradation, and hence mitotic progression. Dephosphorylated on Ser-121, Ser-307, Ser-314 and Thr-323 by phosphatase PPP2CA in an IER5-dependent manner, leading to HSF1-mediated transactivation activity. Sumoylated with SUMO1 and SUMO2 upon heat shock in a ERK2-dependent manner. Sumoylated by SUMO1 on Lys-298; sumoylation occurs upon heat shock and promotes its localization to nuclear stress bodies and DNA-binding activity. Phosphorylation on Ser-303 and Ser-307 is probably a prerequisite for sumoylation. In terms of processing, acetylated on Lys-118; this acetylation is decreased in a IER5-dependent manner. Acetylated on Lys-118, Lys-208 and Lys-298; these acetylations occur in a EP300-dependent manner. Acetylated on Lys-80; this acetylation inhibits DNA-binding activity upon heat shock. Deacetylated on Lys-80 by SIRT1; this deacetylation increases DNA-binding activity. Post-translationally, ubiquitinated by SCF(BTRC) and degraded following stimulus-dependent phosphorylation at Ser-216 by PLK1 in mitosis. Polyubiquitinated. Undergoes proteasomal degradation upon heat shock and during the attenuation and recovery phase period of the heat shock response.

It localises to the nucleus. It is found in the cytoplasm. The protein localises to the nucleoplasm. The protein resides in the perinuclear region. Its subcellular location is the cytoskeleton. It localises to the spindle pole. It is found in the microtubule organizing center. The protein localises to the centrosome. The protein resides in the chromosome. Its subcellular location is the centromere. It localises to the kinetochore. Functionally, functions as a stress-inducible and DNA-binding transcription factor that plays a central role in the transcriptional activation of the heat shock response (HSR), leading to the expression of a large class of molecular chaperones, heat shock proteins (HSPs), that protect cells from cellular insult damage. In unstressed cells, is present in a HSP90-containing multichaperone complex that maintains it in a non-DNA-binding inactivated monomeric form. Upon exposure to heat and other stress stimuli, undergoes homotrimerization and activates HSP gene transcription through binding to site-specific heat shock elements (HSEs) present in the promoter regions of HSP genes. Upon heat shock stress, forms a chromatin-associated complex with TTC5/STRAP and p300/EP300 to stimulate HSR transcription, therefore increasing cell survival. Activation is reversible, and during the attenuation and recovery phase period of the HSR, returns to its unactivated form. Binds to inverted 5'-NGAAN-3' pentamer DNA sequences. Binds to chromatin at heat shock gene promoters. Activates transcription of transcription factor FOXR1 which in turn activates transcription of the heat shock chaperones HSPA1A and HSPA6 and the antioxidant NADPH-dependent reductase DHRS2. Binds the promoter region upstream of exon 1 of Mpv17l to activate expression of the M-LPS isoform which is involved in metabolism of reactive oxygen species. Also serves several other functions independently of its transcriptional activity. Involved in the repression of Ras-induced transcriptional activation of the c-fos gene in heat-stressed cells. Positively regulates pre-mRNA 3'-end processing and polyadenylation of HSP70 mRNA upon heat-stressed cells in a symplekin (SYMPK)-dependent manner. Plays a role in nuclear export of stress-induced HSP70 mRNA. Plays a role in the regulation of mitotic progression. Also plays a role as a negative regulator of non-homologous end joining (NHEJ) repair activity in a DNA damage-dependent manner. Involved in stress-induced cancer cell proliferation in a IER5-dependent manner. The protein is Heat shock factor protein 1 of Mus musculus (Mouse).